A 55-amino-acid chain; its full sequence is Hirustasin (55 aa).

5 disulfide bridges follow: Cys-6–Cys-17, Cys-11–Cys-22, Cys-24–Cys-44, Cys-29–Cys-48, and Cys-33–Cys-50. One can recognise an Antistasin-like domain in the interval 24 to 50 (CNEVHCRIRCKYGLKKDENGCEYPCSC).

Belongs to the protease inhibitor I15 (antistasin) family.

The protein localises to the secreted. Acts as an inhibitor of tissue kallikrein, trypsin, chymotrypsin and neutrophil cathepsin G. In Hirudo medicinalis (Medicinal leech), this protein is Hirustasin.